A 705-amino-acid polypeptide reads, in one-letter code: Glycogen [starch] synthase isoform 2 (705 aa).

Arginine 20 contributes to the UDP binding site. Residue serine 159 is modified to Phosphoserine. UDP-alpha-D-glucose-binding residues include histidine 193 and arginine 199. Histidine 280, glutamate 281, glutamine 283, histidine 286, and lysine 290 together coordinate alpha-D-glucose 6-phosphate. Position 320 (arginine 320) interacts with UDP. Residue arginine 320 coordinates UDP-alpha-D-glucose. Residues serine 363 and serine 467 each carry the phosphoserine modification. Residue histidine 500 coordinates alpha-D-glucose 6-phosphate. Residues glutamate 509, tryptophan 511, and glycine 512 each contribute to the UDP-alpha-D-glucose site. Threonine 514 contacts UDP. Alpha-D-glucose 6-phosphate is bound by residues arginine 583 and arginine 587. A Phosphoserine modification is found at serine 651. Serine 655 carries the post-translational modification Phosphoserine; by PHO85. A phosphoserine; by PKA mark is found at serine 661 and serine 663. The residue at position 668 (threonine 668) is a Phosphothreonine; by PHO85. The interval 686–705 (SLGVNPAADDDDDGPYADDS) is disordered. Residues 693–705 (ADDDDDGPYADDS) show a composition bias toward acidic residues.

Belongs to the glycosyltransferase 3 family. As to quaternary structure, interacts with PCL10. Post-translationally, phosphorylated by the cyclin-CDK PCL10-PHO85. Phosphorylation causes inactivation of enzyme.

Its subcellular location is the cytoplasm. It localises to the cytosol. The catalysed reaction is [(1-&gt;4)-alpha-D-glucosyl](n) + UDP-alpha-D-glucose = [(1-&gt;4)-alpha-D-glucosyl](n+1) + UDP + H(+). It participates in glycan biosynthesis; glycogen biosynthesis. With respect to regulation, allosteric activation by glucose-6-phosphate, and phosphorylation by a cAMP-dependent kinase. Functionally, glycogen synthase participates in the glycogen biosynthetic process along with glycogenin and glycogen branching enzyme. Extends the primer composed of a few glucose units formed by glycogenin by adding new glucose units to it. In this context, glycogen synthase transfers the glycosyl residue from UDP-Glc to the non-reducing end of alpha-1,4-glucan. This chain is Glycogen [starch] synthase isoform 2 (GSY2), found in Saccharomyces cerevisiae (strain ATCC 204508 / S288c) (Baker's yeast).